The primary structure comprises 623 residues: Phosphomethylpyrimidine synthase (623 aa).

Substrate contacts are provided by residues asparagine 221, methionine 250, tyrosine 279, histidine 315, serine 335–glycine 337, aspartate 376–arginine 379, and glutamate 415. Histidine 419 contributes to the Zn(2+) binding site. A substrate-binding site is contributed by tyrosine 442. Residue histidine 483 coordinates Zn(2+). Residues cysteine 563, cysteine 566, and cysteine 571 each contribute to the [4Fe-4S] cluster site.

This sequence belongs to the ThiC family. In terms of assembly, homodimer. Requires [4Fe-4S] cluster as cofactor.

It catalyses the reaction 5-amino-1-(5-phospho-beta-D-ribosyl)imidazole + S-adenosyl-L-methionine = 4-amino-2-methyl-5-(phosphooxymethyl)pyrimidine + CO + 5'-deoxyadenosine + formate + L-methionine + 3 H(+). It participates in cofactor biosynthesis; thiamine diphosphate biosynthesis. Functionally, catalyzes the synthesis of the hydroxymethylpyrimidine phosphate (HMP-P) moiety of thiamine from aminoimidazole ribotide (AIR) in a radical S-adenosyl-L-methionine (SAM)-dependent reaction. The chain is Phosphomethylpyrimidine synthase from Parvibaculum lavamentivorans (strain DS-1 / DSM 13023 / NCIMB 13966).